The following is a 337-amino-acid chain: N-acetyl-gamma-glutamyl-phosphate reductase (337 aa).

C145 is a catalytic residue.

It belongs to the NAGSA dehydrogenase family. Type 1 subfamily.

Its subcellular location is the cytoplasm. It catalyses the reaction N-acetyl-L-glutamate 5-semialdehyde + phosphate + NADP(+) = N-acetyl-L-glutamyl 5-phosphate + NADPH + H(+). The protein operates within amino-acid biosynthesis; L-arginine biosynthesis; N(2)-acetyl-L-ornithine from L-glutamate: step 3/4. Its function is as follows. Catalyzes the NADPH-dependent reduction of N-acetyl-5-glutamyl phosphate to yield N-acetyl-L-glutamate 5-semialdehyde. This chain is N-acetyl-gamma-glutamyl-phosphate reductase, found in Methanosarcina barkeri (strain Fusaro / DSM 804).